A 400-amino-acid chain; its full sequence is Transcription initiation factor IIF subunit beta (400 aa).

A compositionally biased stretch (polar residues) spans 1–19 (MSSGSAGAPALSNNSTNSV). Positions 1–47 (MSSGSAGAPALSNNSTNSVAKEKSGNISGDEYLSQEEEVFDGNDIEN) are disordered. Serine 28, serine 34, and serine 56 each carry phosphoserine. Over residues 33 to 47 (LSQEEEVFDGNDIEN) the composition is skewed to acidic residues. 2 disordered regions span residues 165 to 194 (QERE…VMTD) and 366 to 400 (TLGE…EDVV). Residues 174–189 (KQQQQKRRNNRKKFNH) show a composition bias toward basic residues. Residues 386–400 (AEADLEDEIEMEDVV) show a composition bias toward acidic residues.

It belongs to the TFIIF beta subunit family. TFIIF is composed of three different subunits: TFG1/RAP74, TFG2/RAP30 and TAF14.

The protein resides in the nucleus. Functionally, TFIIF is a general transcription initiation factor that binds to RNA polymerase II. Its functions include the recruitment of RNA polymerase II to the promoter bound DNA-TBP-TFIIB complex, decreasing the affinity of RNA polymerase II for non-specific DNA, allowing for the subsequent recruitment of TFIIE and TFIIH, and facilitating RNA polymerase II elongation. The protein is Transcription initiation factor IIF subunit beta (TFG2) of Saccharomyces cerevisiae (strain ATCC 204508 / S288c) (Baker's yeast).